The following is a 591-amino-acid chain: MAAATSSIAPSLSCPSPSSSSKTLWSSKARTLALPNIGFLSSSSKSLRSLTATVAGNGATGSSLAARMVSSSAVKAPVSLDFETSVFKKEKVSLAGYEEYIVRGGRDLFKHLPDAFKGIKQIGVIGWGSQGPAQAQNLRDSLVEAKSDIVVKIGLRKGSRSFEEARAAGFTEESGTLGDIWETIAGSDLVLLLISDAAQADNYEKIFSHMKPNSILGLSHGFLLGHLQSSGLDFPKNISVVAVCPKGMGPSVRRLYVQGKEINGAGINASFAVHQDVDGRAADVALGWSVALGSPFTFATTLEQEYRSDIFGERGILLGAVHGIVESLFRRYTENGMSEDLAYKNTVECITGTISRTISTQGMLAVYNSLSEEGKKDFETAYSASFYPCMEILYECYEDVQSGSEIRSVVLAGRRFYEKEGLPAFPMGNIDQTRMWKVGERVRKSRPAGDLGPLYPFTAGVYVALMMAQIEILRKKGHSYSEIINESVIESVDSLNPFMHARGVSFMVDNCSTTARLGSRKWAPRFDYILTQQALVAVDSGAAINRDLISNFFSDPVHGAIEVCAQLRPTVDISVPADADFVRPELRQSSN.

Residues 1–20 (MAAATSSIAPSLSCPSPSSS) are disordered. The transit peptide at 1–52 (MAAATSSIAPSLSCPSPSSSSKTLWSSKARTLALPNIGFLSSSSKSLRSLTA) directs the protein to the chloroplast. At Thr53 the chain carries N-acetylthreonine. The 199-residue stretch at 102 to 300 (VRGGRDLFKH…ALGSPFTFAT (199 aa)) folds into the KARI N-terminal Rossmann domain. NADP(+) contacts are provided by residues 123–130 (GVIGWGSQ), 156–161 (RKGSRS), and 195–199 (SDAAQ). His220 is an active-site residue. KARI C-terminal knotted domains lie at 301 to 449 (TLEQ…RPAG) and 450 to 586 (DLGP…RPEL). Asp309, Glu313, Glu486, and Glu490 together coordinate Mg(2+). Ser512 serves as a coordination point for substrate.

This sequence belongs to the ketol-acid reductoisomerase family. Homodimer. Mg(2+) serves as cofactor.

It localises to the plastid. Its subcellular location is the chloroplast. It carries out the reaction (2R)-2,3-dihydroxy-3-methylbutanoate + NADP(+) = (2S)-2-acetolactate + NADPH + H(+). The enzyme catalyses (2R,3R)-2,3-dihydroxy-3-methylpentanoate + NADP(+) = (S)-2-ethyl-2-hydroxy-3-oxobutanoate + NADPH + H(+). It functions in the pathway amino-acid biosynthesis; L-isoleucine biosynthesis; L-isoleucine from 2-oxobutanoate: step 2/4. The protein operates within amino-acid biosynthesis; L-valine biosynthesis; L-valine from pyruvate: step 2/4. The chain is Ketol-acid reductoisomerase, chloroplastic from Arabidopsis thaliana (Mouse-ear cress).